Consider the following 344-residue polypeptide: uncharacterized protein (344 aa).

An N-terminal signal peptide occupies residues 1 to 19 (MRIIFYLTLLLFIFNKVKS). Residues 323–344 (SATRNQISIMVLILSVLLVLIL) constitute a propeptide, removed in mature form.

Its subcellular location is the cell membrane. This is an uncharacterized protein from Dictyostelium discoideum (Social amoeba).